The chain runs to 82 residues: Acyl carrier protein (82 aa).

Positions 4–79 constitute a Carrier domain; the sequence is PEMEERLRKI…DALNYLETHQ (76 aa). Residue Ser-39 is modified to O-(pantetheine 4'-phosphoryl)serine.

The protein belongs to the acyl carrier protein (ACP) family. 4'-phosphopantetheine is transferred from CoA to a specific serine of apo-ACP by AcpS. This modification is essential for activity because fatty acids are bound in thioester linkage to the sulfhydryl of the prosthetic group.

It is found in the cytoplasm. It participates in lipid metabolism; fatty acid biosynthesis. Functionally, carrier of the growing fatty acid chain in fatty acid biosynthesis. In Chloroflexus aurantiacus (strain ATCC 29366 / DSM 635 / J-10-fl), this protein is Acyl carrier protein.